A 353-amino-acid polypeptide reads, in one-letter code: Photosystem II D2 protein (353 aa).

Thr2 is subject to N-acetylthreonine. The residue at position 2 (Thr2) is a Phosphothreonine. A helical transmembrane segment spans residues 41 to 61; it reads CAYFAVGGWFTGTTFVTSWYT. Position 118 (His118) interacts with chlorophyll a. The chain crosses the membrane as a helical span at residues 125-141; that stretch reads GFMLRQFELARSVQLRP. Pheophytin a is bound by residues Gln130 and Asn143. A helical membrane pass occupies residues 153–166; sequence VFVSVFLIYPLGQS. Residue His198 participates in chlorophyll a binding. A helical membrane pass occupies residues 208–228; it reads AALLCAIHGATVENTLFEDGD. Positions 215 and 262 each coordinate a plastoquinone. His215 contributes to the Fe cation binding site. His269 serves as a coordination point for Fe cation. Residues 279–295 traverse the membrane as a helical segment; the sequence is GLWMSALGVVGLALNLR.

The protein belongs to the reaction center PufL/M/PsbA/D family. In terms of assembly, PSII is composed of 1 copy each of membrane proteins PsbA, PsbB, PsbC, PsbD, PsbE, PsbF, PsbH, PsbI, PsbJ, PsbK, PsbL, PsbM, PsbT, PsbX, PsbY, PsbZ, Psb30/Ycf12, at least 3 peripheral proteins of the oxygen-evolving complex and a large number of cofactors. It forms dimeric complexes. The cofactor is The D1/D2 heterodimer binds P680, chlorophylls that are the primary electron donor of PSII, and subsequent electron acceptors. It shares a non-heme iron and each subunit binds pheophytin, quinone, additional chlorophylls, carotenoids and lipids. There is also a Cl(-1) ion associated with D1 and D2, which is required for oxygen evolution. The PSII complex binds additional chlorophylls, carotenoids and specific lipids..

It is found in the plastid. It localises to the chloroplast thylakoid membrane. It catalyses the reaction 2 a plastoquinone + 4 hnu + 2 H2O = 2 a plastoquinol + O2. Photosystem II (PSII) is a light-driven water:plastoquinone oxidoreductase that uses light energy to abstract electrons from H(2)O, generating O(2) and a proton gradient subsequently used for ATP formation. It consists of a core antenna complex that captures photons, and an electron transfer chain that converts photonic excitation into a charge separation. The D1/D2 (PsbA/PsbD) reaction center heterodimer binds P680, the primary electron donor of PSII as well as several subsequent electron acceptors. D2 is needed for assembly of a stable PSII complex. This is Photosystem II D2 protein from Cucumis sativus (Cucumber).